The following is a 186-amino-acid chain: Putative manganese efflux pump MntP (186 aa).

6 consecutive transmembrane segments (helical) span residues 1 to 21 (MSFL…FAVS), 39 to 59 (LAVF…IGGS), 61 to 81 (VSSF…AFIG), 102 to 122 (YSVL…VGMS), 134 to 156 (VIII…YRLG), and 165 to 185 (ILGG…HMLW).

Belongs to the MntP (TC 9.B.29) family.

The protein resides in the cell membrane. Functionally, probably functions as a manganese efflux pump. The polypeptide is Putative manganese efflux pump MntP (Methanosarcina acetivorans (strain ATCC 35395 / DSM 2834 / JCM 12185 / C2A)).